Reading from the N-terminus, the 489-residue chain is Carboxyl-terminal-processing peptidase 1, chloroplastic (489 aa).

The span at 1–20 shows a compositional bias: low complexity; the sequence is MRLLLPFSSPLSATSSPSTP. Residues 1–27 are disordered; the sequence is MRLLLPFSSPLSATSSPSTPQFIPELP. Residues 189-273 form the PDZ domain; the sequence is FSRMSKYDIT…TFVVLKVKHG (85 aa). Catalysis depends on charge relay system residues Ser403 and Lys428.

The protein belongs to the peptidase S41A family.

It localises to the plastid. The protein resides in the chloroplast thylakoid lumen. The catalysed reaction is The enzyme shows specific recognition of a C-terminal tripeptide, Xaa-Yaa-Zaa, in which Xaa is preferably Ala or Leu, Yaa is preferably Ala or Tyr, and Zaa is preferably Ala, but then cleaves at a variable distance from the C-terminus. A typical cleavage is -Ala-Ala-|-Arg-Ala-Ala-Lys-Glu-Asn-Tyr-Ala-Leu-Ala-Ala.. Functionally, protease involved in the C-terminal processing of the chloroplastic D1 protein of photosystem II. This proteolytic processing is necessary to allow the light-driven assembly of the tetranuclear manganese cluster, which is responsible for photosynthetic water oxidation. In Arabidopsis thaliana (Mouse-ear cress), this protein is Carboxyl-terminal-processing peptidase 1, chloroplastic (CTPA1).